The sequence spans 617 residues: UvrABC system protein C (617 aa).

A GIY-YIG domain is found at Thr11–Val85. Positions Ala194–Leu229 constitute a UVR domain.

The protein belongs to the UvrC family. In terms of assembly, interacts with UvrB in an incision complex.

It localises to the cytoplasm. The UvrABC repair system catalyzes the recognition and processing of DNA lesions. UvrC both incises the 5' and 3' sides of the lesion. The N-terminal half is responsible for the 3' incision and the C-terminal half is responsible for the 5' incision. This Deinococcus radiodurans (strain ATCC 13939 / DSM 20539 / JCM 16871 / CCUG 27074 / LMG 4051 / NBRC 15346 / NCIMB 9279 / VKM B-1422 / R1) protein is UvrABC system protein C.